Consider the following 326-residue polypeptide: Meso-diaminopimelate D-dehydrogenase (326 aa).

Residues 11 to 14 (YGNL), 35 to 37 (TRR), 69 to 72 (CGGS), 92 to 94 (SFD), and 121 to 125 (VGWDP) contribute to the NADP(+) site. Residues aspartate 94, aspartate 124, tryptophan 148, 154-155 (QG), threonine 173, arginine 199, histidine 249, and asparagine 276 contribute to the substrate site.

Belongs to the diaminopimelate dehydrogenase family. Homodimer.

It catalyses the reaction meso-2,6-diaminopimelate + NADP(+) + H2O = (S)-2-amino-6-oxoheptanedioate + NH4(+) + NADPH + H(+). It participates in amino-acid biosynthesis; L-lysine biosynthesis via DAP pathway; DL-2,6-diaminopimelate from (S)-tetrahydrodipicolinate: step 1/1. L,L-2,6-diaminopimelate, D,D-2,6-diaminopimelate and meso-2,5-diaminoadipate competitively inhibit the oxidation of meso-2,6-diaminopimelate. L-2-amino-6-methylene-pimelate is also a potent competitive inhibitor (5 uM) of this reaction. Glyoxylate inhibits the reductive amination of L-2-amino-6-oxopimelate about 30%. The enzyme is inhibited completely by p-chloromercuribenzoate and HgCl(2) in vitro. In terms of biological role, catalyzes the reversible NADPH-dependent reductive amination of L-2-amino-6-oxopimelate, the acyclic form of L-tetrahydrodipicolinate, to generate the meso compound, D,L-2,6-diaminopimelate. Probably plays a role in lysine biosynthesis. Exhibits a high substrate specificity, since alpha-ketoglutarate, pyruvate, oxaloacetate, glyoxylate, alpha-ketobutyrate, alpha-ketovalerate, alpha-ketocaproate, alpha-ketoisocaproate, alpha-ketoisovalerate, and phenylpyruvate are not substrates for the reductive amination reaction, and L,L-2,6-diaminopimelate, D,D-2,6-diaminopimelate, DL-alpha-aminopimelate, meso- and DL-2,5-diaminoadipate, L-djenkolate, L-cystine, L-lysine, S-(beta-aminoethy1)-L-homocysteine, L-ornithine, L-arginine, L-alpha,gamma-diaminobutyrate, L-histidine, L-phenylalanine, L-tyrosine, L-glutamate, L-aspartate, L-leucine, L-valine, L-methionine, L-serine, L-alanine, L-alpha-aminobutyrate, D-lysine, D-glutamate, D-leucine, D-alanine, D-phenylalanine, epsilon-aminocaproate, 7-aminoheptanoate, and 8-aminooctanoate are not substrates for the oxidative deamination reaction. Cannot use NAD(+) or NAD(+) analogs instead of NADP(+) for the oxidative deamination reaction. This chain is Meso-diaminopimelate D-dehydrogenase (dapdh), found in Lysinibacillus sphaericus (Bacillus sphaericus).